Here is a 424-residue protein sequence, read N- to C-terminus: Enolase (424 aa).

Gln162 serves as a coordination point for (2R)-2-phosphoglycerate. The active-site Proton donor is Glu204. Asp241, Glu284, and Asp311 together coordinate Mg(2+). (2R)-2-phosphoglycerate-binding residues include Lys336, Arg365, Ser366, and Lys387. Lys336 acts as the Proton acceptor in catalysis.

Belongs to the enolase family. Mg(2+) is required as a cofactor.

Its subcellular location is the cytoplasm. The protein localises to the secreted. It is found in the cell surface. The enzyme catalyses (2R)-2-phosphoglycerate = phosphoenolpyruvate + H2O. It functions in the pathway carbohydrate degradation; glycolysis; pyruvate from D-glyceraldehyde 3-phosphate: step 4/5. Functionally, catalyzes the reversible conversion of 2-phosphoglycerate (2-PG) into phosphoenolpyruvate (PEP). It is essential for the degradation of carbohydrates via glycolysis. The sequence is that of Enolase from Rhizobium johnstonii (strain DSM 114642 / LMG 32736 / 3841) (Rhizobium leguminosarum bv. viciae).